Reading from the N-terminus, the 629-residue chain is Polyadenylate-binding protein 2 (629 aa).

Residues 1–12 show a composition bias toward polar residues; the sequence is MAQVQLQGQTPN. The disordered stretch occupies residues 1–25; it reads MAQVQLQGQTPNGSTAAVTSAPATS. Low complexity predominate over residues 13–25; sequence GSTAAVTSAPATS. RRM domains follow at residues 36 to 114, 124 to 201, 215 to 292, and 318 to 395; these read TSLY…YSHR, GNIF…PFLR, TNVY…RAQK, and SNLY…IAQR. The disordered stretch occupies residues 480 to 507; it reads PQQQRPGGGRRPGGIQHSQQQNPMMQQQ. Low complexity predominate over residues 492 to 507; sequence GGIQHSQQQNPMMQQQ. Positions 539–616 constitute a PABC domain; that stretch reads TIGALASNLS…AMDVLRSVAA (78 aa).

The protein belongs to the polyadenylate-binding protein type-1 family. As to quaternary structure, interacts with eIF-iso4G. Interacts with ERD15/CID1 and CID7. Interacts with Turnip mosaic virus (TuMV) VPg-Pro and RNA-dependent RNA polymerase (RdRp). As to expression, expressed in all organs (at the protein level) but under distinct spatial and temporal regulation within each organ.

The protein localises to the cytoplasm. Its subcellular location is the nucleus. Its function is as follows. Binds the poly(A) tail of mRNA. Appears to be an important mediator of the multiple roles of the poly(A) tail in mRNA biogenesis, stability and translation. In the cytoplasm, affects both translation and mRNA decay. Stimulates translation by interaction with translation initiation factor eIF4G, a subunit of the cap-binding complex eIF4F, bringing the 5'- and 3'-ends of the mRNA in proximity. The formation of this circular mRNP structure appears to be critical for the synergistic effects of the cap and the poly(A) tail in facilitating translation initiation, recycling of ribosomes, and mRNA stability. During infection with potyvirus TuMV, acts as a potential integral component of the viral replicase complex that could play an important role in the regulation of potyviral RNA-dependent RNA polymerase (RdRp). Binds to uridylated mRNAs and determines the size of uridine extensions. Limits uridine extension by URT1, likely by binding to the oligo(A) tail and preventing URT1 access. In Arabidopsis thaliana (Mouse-ear cress), this protein is Polyadenylate-binding protein 2 (PAB2).